Consider the following 540-residue polypeptide: Chaperonin GroEL (540 aa).

Residues Thr-29–Pro-32, Asp-86–Thr-90, Gly-413, Asn-476–Ala-478, and Asp-492 each bind ATP.

It belongs to the chaperonin (HSP60) family. Forms a cylinder of 14 subunits composed of two heptameric rings stacked back-to-back. Interacts with the co-chaperonin GroES.

It localises to the cytoplasm. The enzyme catalyses ATP + H2O + a folded polypeptide = ADP + phosphate + an unfolded polypeptide.. Together with its co-chaperonin GroES, plays an essential role in assisting protein folding. The GroEL-GroES system forms a nano-cage that allows encapsulation of the non-native substrate proteins and provides a physical environment optimized to promote and accelerate protein folding. This Streptococcus anginosus protein is Chaperonin GroEL.